We begin with the raw amino-acid sequence, 551 residues long: Glucans biosynthesis protein D (551 aa).

The segment at residues 1–32 is a signal peptide (tat-type signal); the sequence is MNRRRFIKASLALAAACGTPGLATLFSRNAWA.

Belongs to the OpgD/OpgG family. Predicted to be exported by the Tat system. The position of the signal peptide cleavage has not been experimentally proven.

Its subcellular location is the periplasm. Its pathway is glycan metabolism; osmoregulated periplasmic glucan (OPG) biosynthesis. Functionally, probably involved in the control of the structural glucose backbone of osmoregulated periplasmic glucans (OPGs). The protein is Glucans biosynthesis protein D of Cronobacter sakazakii (strain ATCC BAA-894) (Enterobacter sakazakii).